Consider the following 749-residue polypeptide: Cytosolic phospholipase A2 (749 aa).

Positions 1-124 constitute a C2 domain; sequence MASIDPYQHI…GEKKQVPFTF (124 aa). The tract at residues 1-178 is phospholipid binding; the sequence is MASIDPYQHI…LRKLLGPEKT (178 aa). Residues aspartate 40, threonine 41, aspartate 43, asparagine 65, aspartate 93, alanine 94, and asparagine 95 each contribute to the Ca(2+) site. The region spanning 138 to 740 is the PLA2c domain; the sequence is VCSSTDLRFS…NDVESRKLHH (603 aa). The active-site Nucleophile is the serine 229. A disordered region spans residues 428-452; it reads HILGNDSSDSDDEMQEPKGTENAKA. A compositionally biased stretch (basic and acidic residues) spans 442–452; that stretch reads QEPKGTENAKA. Aspartate 549 functions as the Proton acceptor in the catalytic mechanism. A disordered region spans residues 729 to 749; it reads SLNDVESRKLHHKDSQSKFQM. Residues 733–749 are compositionally biased toward basic and acidic residues; it reads VESRKLHHKDSQSKFQM.

It is found in the cytoplasm. Its subcellular location is the cytoplasmic vesicle. It catalyses the reaction a 1,2-diacyl-sn-glycero-3-phosphocholine + H2O = a 1-acyl-sn-glycero-3-phosphocholine + a fatty acid + H(+). It carries out the reaction a 1-acyl-sn-glycero-3-phosphocholine + H2O = sn-glycerol 3-phosphocholine + a fatty acid + H(+). With respect to regulation, stimulated by agonists such as ATP, EGF, thrombin and bradykinin as well as by cytosolic Ca(2+). Selectively hydrolyzes arachidonyl phospholipids in the sn-2 position releasing arachidonic acid. Together with its lysophospholipid activity, it is implicated in the initiation of the inflammatory response. The sequence is that of Cytosolic phospholipase A2 (pla2g4a) from Xenopus laevis (African clawed frog).